Consider the following 407-residue polypeptide: Methylthioribose kinase (407 aa).

ATP contacts are provided by residues asparagine 40, lysine 57, and 111–113; that span reads EDL. Residue aspartate 229 coordinates substrate. An ATP-binding site is contributed by 246–248; the sequence is DAE. Substrate is bound at residue arginine 344.

The protein belongs to the methylthioribose kinase family. As to quaternary structure, homodimer.

The enzyme catalyses 5-(methylsulfanyl)-D-ribose + ATP = 5-(methylsulfanyl)-alpha-D-ribose 1-phosphate + ADP + H(+). Its pathway is amino-acid biosynthesis; L-methionine biosynthesis via salvage pathway; S-methyl-5-thio-alpha-D-ribose 1-phosphate from S-methyl-5'-thioadenosine (hydrolase route): step 2/2. Functionally, catalyzes the phosphorylation of methylthioribose into methylthioribose-1-phosphate. This chain is Methylthioribose kinase, found in Yersinia pseudotuberculosis serotype IB (strain PB1/+).